Reading from the N-terminus, the 81-residue chain is Large ribosomal subunit protein bL31B (81 aa).

This sequence belongs to the bacterial ribosomal protein bL31 family. Type B subfamily. Part of the 50S ribosomal subunit.

This Pediococcus pentosaceus (strain ATCC 25745 / CCUG 21536 / LMG 10740 / 183-1w) protein is Large ribosomal subunit protein bL31B.